The following is a 344-amino-acid chain: Trace amine-associated receptor 8c (344 aa).

At methionine 1 to methionine 36 the chain is on the extracellular side. Asparagine 4 and asparagine 18 each carry an N-linked (GlcNAc...) asparagine glycan. 2 disulfide bridges follow: cysteine 21-cysteine 185 and cysteine 96-cysteine 189. A helical membrane pass occupies residues valine 37 to leucine 57. Topologically, residues histidine 58 to asparagine 67 are cytoplasmic. Residues phenylalanine 68–serine 88 form a helical membrane-spanning segment. At methionine 89–threonine 102 the chain is on the extracellular side. A helical transmembrane segment spans residues phenylalanine 103–valine 127. Over aspartate 128 to serine 146 the chain is Cytoplasmic. The chain crosses the membrane as a helical span at residues valine 147–phenylalanine 167. Residues tyrosine 168–aspartate 196 lie on the Extracellular side of the membrane. The helical transmembrane segment at tryptophan 197–serine 217 threads the bilayer. At lysine 218–threonine 260 the chain is on the cytoplasmic side. A helical membrane pass occupies residues leucine 261–isoleucine 281. Topologically, residues aspartate 282–glutamate 295 are extracellular. A helical membrane pass occupies residues phenylalanine 296–phenylalanine 319. Topologically, residues arginine 320 to glutamate 344 are cytoplasmic.

It belongs to the G-protein coupled receptor 1 family.

The protein resides in the cell membrane. Olfactory receptor activated by trace amines, such as N-methylpiperidine and N,N-dimethylcyclohexylamine. Trace amine compounds are enriched in animal body fluids and act on trace amine-associated receptors (TAARs) to elicit both intraspecific and interspecific innate behaviors. Ligand-binding causes a conformation change that triggers signaling via G(s)-class of G alpha proteins (GNAL or GNAS). The chain is Trace amine-associated receptor 8c from Rattus norvegicus (Rat).